A 454-amino-acid chain; its full sequence is Allantoinase (454 aa).

Positions 60, 62, 147, 183, 239, and 312 each coordinate Zn(2+). N6-carboxylysine is present on Lys-147.

It belongs to the metallo-dependent hydrolases superfamily. Allantoinase family. As to quaternary structure, homotetramer. Zn(2+) serves as cofactor. In terms of processing, carboxylation allows a single lysine to coordinate two zinc ions.

It carries out the reaction (S)-allantoin + H2O = allantoate + H(+). It functions in the pathway nitrogen metabolism; (S)-allantoin degradation; allantoate from (S)-allantoin: step 1/1. Functionally, catalyzes the conversion of allantoin (5-ureidohydantoin) to allantoic acid by hydrolytic cleavage of the five-member hydantoin ring. This Rubrobacter xylanophilus (strain DSM 9941 / JCM 11954 / NBRC 16129 / PRD-1) protein is Allantoinase.